Here is an 85-residue protein sequence, read N- to C-terminus: U4-theraphotoxin-Hhn1w (85 aa).

A signal peptide spans 1–22; that stretch reads MKVTLIAILTCAAVLALHTTAA. A propeptide spanning residues 23 to 48 is cleaved from the precursor; it reads EELEAESQLMEVGMPDTELAAVDEER. Disulfide bonds link C52–C66, C56–C77, and C71–C82.

It belongs to the neurotoxin 12 (Hwtx-2) family. 02 (Hwtx-2) subfamily. In terms of tissue distribution, expressed by the venom gland.

Its subcellular location is the secreted. Its function is as follows. Postsynaptic neurotoxin. The sequence is that of U4-theraphotoxin-Hhn1w from Cyriopagopus hainanus (Chinese bird spider).